The chain runs to 91 residues: Small ribosomal subunit protein bS16 (91 aa).

Belongs to the bacterial ribosomal protein bS16 family.

The protein is Small ribosomal subunit protein bS16 of Enterococcus faecalis (strain ATCC 700802 / V583).